The primary structure comprises 242 residues: Small ribosomal subunit protein uS3 (242 aa).

The KH type-2 domain maps to 39-110; the sequence is IRRFIHKKYG…QVRINVVEVE (72 aa). The segment at 217 to 242 is disordered; sequence TMPVGASPRRRGNRRPQQFEDRSNEG. Over residues 233–242 the composition is skewed to basic and acidic residues; it reads QQFEDRSNEG.

It belongs to the universal ribosomal protein uS3 family. In terms of assembly, part of the 30S ribosomal subunit. Forms a tight complex with proteins S10 and S14.

Its function is as follows. Binds the lower part of the 30S subunit head. Binds mRNA in the 70S ribosome, positioning it for translation. The protein is Small ribosomal subunit protein uS3 of Prochlorococcus marinus (strain MIT 9313).